The sequence spans 145 residues: Large ribosomal subunit protein uL13 (145 aa).

This sequence belongs to the universal ribosomal protein uL13 family. Part of the 50S ribosomal subunit.

This protein is one of the early assembly proteins of the 50S ribosomal subunit, although it is not seen to bind rRNA by itself. It is important during the early stages of 50S assembly. This is Large ribosomal subunit protein uL13 from Macrococcus caseolyticus (strain JCSC5402) (Macrococcoides caseolyticum).